The sequence spans 434 residues: Glutamyl-tRNA reductase (434 aa).

Substrate contacts are provided by residues 49 to 52, S114, 119 to 121, and Q125; these read TCNR and EPQ. C50 acts as the Nucleophile in catalysis. 199 to 204 contacts NADP(+); it reads GAGETI.

This sequence belongs to the glutamyl-tRNA reductase family. Homodimer.

It catalyses the reaction (S)-4-amino-5-oxopentanoate + tRNA(Glu) + NADP(+) = L-glutamyl-tRNA(Glu) + NADPH + H(+). The protein operates within porphyrin-containing compound metabolism; protoporphyrin-IX biosynthesis; 5-aminolevulinate from L-glutamyl-tRNA(Glu): step 1/2. Catalyzes the NADPH-dependent reduction of glutamyl-tRNA(Glu) to glutamate 1-semialdehyde (GSA). This chain is Glutamyl-tRNA reductase, found in Pasteurella multocida (strain Pm70).